A 131-amino-acid chain; its full sequence is Mediator of RNA polymerase II transcription subunit 31 (131 aa).

Residue Ala-2 is modified to N-acetylalanine.

It belongs to the Mediator complex subunit 31 family. Component of the Mediator complex, which is composed of MED1, MED4, MED6, MED7, MED8, MED9, MED10, MED11, MED12, MED13, MED13L, MED14, MED15, MED16, MED17, MED18, MED19, MED20, MED21, MED22, MED23, MED24, MED25, MED26, MED27, MED29, MED30, MED31, CCNC, CDK8 and CDC2L6/CDK11. The MED12, MED13, CCNC and CDK8 subunits form a distinct module termed the CDK8 module. Mediator containing the CDK8 module is less active than Mediator lacking this module in supporting transcriptional activation. Individual preparations of the Mediator complex lacking one or more distinct subunits have been variously termed ARC, CRSP, DRIP, PC2, SMCC and TRAP.

It is found in the nucleus. In terms of biological role, component of the Mediator complex, a coactivator involved in the regulated transcription of nearly all RNA polymerase II-dependent genes. Mediator functions as a bridge to convey information from gene-specific regulatory proteins to the basal RNA polymerase II transcription machinery. Mediator is recruited to promoters by direct interactions with regulatory proteins and serves as a scaffold for the assembly of a functional preinitiation complex with RNA polymerase II and the general transcription factors. In Homo sapiens (Human), this protein is Mediator of RNA polymerase II transcription subunit 31 (MED31).